Consider the following 118-residue polypeptide: Ribosome-binding factor A (118 aa).

Belongs to the RbfA family. In terms of assembly, monomer. Binds 30S ribosomal subunits, but not 50S ribosomal subunits or 70S ribosomes.

The protein resides in the cytoplasm. One of several proteins that assist in the late maturation steps of the functional core of the 30S ribosomal subunit. Associates with free 30S ribosomal subunits (but not with 30S subunits that are part of 70S ribosomes or polysomes). Required for efficient processing of 16S rRNA. May interact with the 5'-terminal helix region of 16S rRNA. This is Ribosome-binding factor A from Geobacter sulfurreducens (strain ATCC 51573 / DSM 12127 / PCA).